The primary structure comprises 411 residues: MSGINKIVLAYSGGLDTSAIIPWLKEHYDAEIIAFVADVGQERDDLEGIEQKAIASGAVKCIVKDLREEFVKEYVYPTLKTGAVYEGTYLLGTSMARPIIAKAMVEAALAEGADAISHGCTGKGNDQVRFEGAVAALAPQLKVIAPWRLWDMRSREDLLAYLEARDIPCKATLKKIYSRDANAWHISTEGGELESTWNEPSEAVWQWTVSAEQAPNEPEYVKLTVAKGEVVAVDDQPLSPHQILTTLNERAGKHGVGRIDITENRMVGMKSRGCYETPGGTVMVAALRAVEELVLDRPTRAWREKLGAEFSHLVYDGRWFTPLCKAIVASANAIAEDLDGEVILKMYKGQVTAVQKKSPNSLYSEDFATFGADEVYDQSHAEGFIRLYTLASRIRAMKEQHQAIGGDHTHG.

Residues 10 to 18 (AYSGGLDTS) and A37 each bind ATP. The L-citrulline site is built by Y89 and S94. Residue G119 participates in ATP binding. L-aspartate contacts are provided by T121, N125, and D126. N125 contributes to the L-citrulline binding site. L-citrulline contacts are provided by R129, S178, S187, E263, and Y275.

The protein belongs to the argininosuccinate synthase family. Type 1 subfamily. Homotetramer.

It localises to the cytoplasm. The enzyme catalyses L-citrulline + L-aspartate + ATP = 2-(N(omega)-L-arginino)succinate + AMP + diphosphate + H(+). Its pathway is amino-acid biosynthesis; L-arginine biosynthesis; L-arginine from L-ornithine and carbamoyl phosphate: step 2/3. In Aeromonas salmonicida (strain A449), this protein is Argininosuccinate synthase.